Reading from the N-terminus, the 245-residue chain is 3-deoxy-manno-octulosonate cytidylyltransferase (245 aa).

It belongs to the KdsB family.

Its subcellular location is the cytoplasm. The catalysed reaction is 3-deoxy-alpha-D-manno-oct-2-ulosonate + CTP = CMP-3-deoxy-beta-D-manno-octulosonate + diphosphate. It functions in the pathway nucleotide-sugar biosynthesis; CMP-3-deoxy-D-manno-octulosonate biosynthesis; CMP-3-deoxy-D-manno-octulosonate from 3-deoxy-D-manno-octulosonate and CTP: step 1/1. It participates in bacterial outer membrane biogenesis; lipopolysaccharide biosynthesis. Functionally, activates KDO (a required 8-carbon sugar) for incorporation into bacterial lipopolysaccharide in Gram-negative bacteria. The chain is 3-deoxy-manno-octulosonate cytidylyltransferase from Rhodopseudomonas palustris (strain TIE-1).